The primary structure comprises 391 residues: DNA-directed RNA polymerase I subunit RPA43 (391 aa).

Disordered stretches follow at residues M1 to S27 and Q220 to K391. Residues G288–R299 are compositionally biased toward basic residues. A coiled-coil region spans residues R289 to I353. Residues M312–D323 are compositionally biased toward polar residues. A compositionally biased stretch (basic residues) spans K336 to D345.

It belongs to the eukaryotic RPA43 RNA polymerase subunit family. As to quaternary structure, component of the RNA polymerase I (Pol I) complex consisting of at least 13 subunits.

The protein resides in the nucleus. It localises to the nucleolus. Functionally, DNA-dependent RNA polymerase catalyzes the transcription of DNA into RNA using the four ribonucleoside triphosphates as substrates. Component of RNA polymerase I which synthesizes ribosomal RNA precursors. May be involved in recruitment of Pol I to rDNA promoters. This chain is DNA-directed RNA polymerase I subunit RPA43, found in Danio rerio (Zebrafish).